The chain runs to 390 residues: Ribonucleoside-diphosphate reductase subunit M2 (390 aa).

At S20 the chain carries Phosphoserine. T33 bears the Phosphothreonine mark. The Cy signature appears at 49 to 51 (RRI). Residues D139, E170, and H173 each coordinate Fe cation. Y177 is an active-site residue. Positions 233, 267, and 270 each coordinate Fe cation.

It belongs to the ribonucleoside diphosphate reductase small chain family. In terms of assembly, heterodimer of a large and a small subunit. Interacts (via Cy motif and when phosphorylated at Thr-33) with CCNF; the interaction occurs exclusively in G2 and early M. Fe cation serves as cofactor. Phosphorylation on Ser-20 relieves the inhibitory effect on Wnt signaling. Phosphorylated on Thr-33 by CDK1 and CDK2; predominantly in G2 and M phase. Post-translationally, ubiquitinated by the SCF(CCNF) E3 ubiquitin-protein ligase complex; leading to its degradation by the proteasome.

The protein localises to the cytoplasm. It is found in the nucleus. It carries out the reaction a 2'-deoxyribonucleoside 5'-diphosphate + [thioredoxin]-disulfide + H2O = a ribonucleoside 5'-diphosphate + [thioredoxin]-dithiol. Provides the precursors necessary for DNA synthesis. Catalyzes the biosynthesis of deoxyribonucleotides from the corresponding ribonucleotides. Inhibits Wnt signaling. This Rattus norvegicus (Rat) protein is Ribonucleoside-diphosphate reductase subunit M2 (Rrm2).